A 478-amino-acid chain; its full sequence is Argininosuccinate lyase (478 aa).

This sequence belongs to the lyase 1 family. Argininosuccinate lyase subfamily.

The protein localises to the cytoplasm. The enzyme catalyses 2-(N(omega)-L-arginino)succinate = fumarate + L-arginine. It participates in amino-acid biosynthesis; L-arginine biosynthesis; L-arginine from L-ornithine and carbamoyl phosphate: step 3/3. The chain is Argininosuccinate lyase from Leptospira biflexa serovar Patoc (strain Patoc 1 / Ames).